Here is an 82-residue protein sequence, read N- to C-terminus: Putative membrane protein insertion efficiency factor (82 aa).

Residues 61 to 82 are disordered; the sequence is HEGGYDPVPKRKNKNSEGKREE.

The protein belongs to the UPF0161 family.

Its subcellular location is the cell inner membrane. Its function is as follows. Could be involved in insertion of integral membrane proteins into the membrane. This is Putative membrane protein insertion efficiency factor from Fusobacterium nucleatum subsp. nucleatum (strain ATCC 25586 / DSM 15643 / BCRC 10681 / CIP 101130 / JCM 8532 / KCTC 2640 / LMG 13131 / VPI 4355).